The sequence spans 455 residues: Phosphoglucosamine mutase (455 aa).

Serine 104 acts as the Phosphoserine intermediate in catalysis. Positions 104, 253, 255, and 257 each coordinate Mg(2+). Serine 104 is subject to Phosphoserine.

This sequence belongs to the phosphohexose mutase family. The cofactor is Mg(2+). In terms of processing, activated by phosphorylation.

The catalysed reaction is alpha-D-glucosamine 1-phosphate = D-glucosamine 6-phosphate. In terms of biological role, catalyzes the conversion of glucosamine-6-phosphate to glucosamine-1-phosphate. This Psychrobacter arcticus (strain DSM 17307 / VKM B-2377 / 273-4) protein is Phosphoglucosamine mutase.